A 302-amino-acid polypeptide reads, in one-letter code: Spermidine synthase (302 aa).

Met-1 is modified (N-acetylmethionine). Residues 18–253 form the PABS domain; that stretch reads EGWFRETCSL…GQIGFMLCSK (236 aa). Gln-49 provides a ligand contact to S-adenosyl 3-(methylsulfanyl)propylamine. Position 79 (Tyr-79) interacts with putrescine. Residues Gln-80, Asp-104, Glu-124, 155-156, and Asp-173 contribute to the S-adenosyl 3-(methylsulfanyl)propylamine site; that span reads DG. The active-site Proton acceptor is the Asp-173. Putrescine is bound by residues 173–176 and Tyr-241; that span reads DSSD.

The protein belongs to the spermidine/spermine synthase family. As to quaternary structure, homodimer or homotetramer.

The catalysed reaction is S-adenosyl 3-(methylsulfanyl)propylamine + putrescine = S-methyl-5'-thioadenosine + spermidine + H(+). Its pathway is amine and polyamine biosynthesis; spermidine biosynthesis; spermidine from putrescine: step 1/1. Its activity is regulated as follows. The activity is thought to be regulated mainly by the availability of decarboxylated S-adenosylmethionine. Its function is as follows. Catalyzes the production of spermidine from putrescine and decarboxylated S-adenosylmethionine (dcSAM). Has a strong preference for putrescine as substrate, and has very low activity towards 1,3-diaminopropane. Has extremely low activity towards spermidine. This is Spermidine synthase (SRM) from Homo sapiens (Human).